We begin with the raw amino-acid sequence, 32 residues long: Ovostatin (32 aa).

A cross-link (isoglutamyl cysteine thioester (Cys-Gln)) is located at residues 27 to 30 (CGEQ).

The protein belongs to the protease inhibitor I39 (alpha-2-macroglobulin) family. In terms of assembly, homotetramer, which consists of two pairs of disulfide-linked chains.

It localises to the secreted. Functionally, is able to inhibit all four classes of proteinases by a unique 'trapping' mechanism. This protein has a peptide stretch, called the 'bait region' which contains specific cleavage sites for different proteinases. When a proteinase cleaves the bait region, a conformational change is induced in the protein which traps the proteinase. The entrapped enzyme remains active against low molecular weight substrates (activity against high molecular weight substrates is greatly reduced). Following cleavage in the bait region a thioester bond is hydrolyzed and mediates the covalent binding of the protein to the proteinase. The protein is Ovostatin of Anas platyrhynchos (Mallard).